Consider the following 165-residue polypeptide: Inorganic pyrophosphatase (165 aa).

The substrate site is built by Lys-21, Arg-35, and Tyr-47. Mg(2+) is bound by residues Asp-57, Asp-62, and Asp-94. Tyr-131 lines the substrate pocket.

It belongs to the PPase family. Homohexamer. Requires Mg(2+) as cofactor.

The protein resides in the cytoplasm. The catalysed reaction is diphosphate + H2O = 2 phosphate + H(+). In terms of biological role, catalyzes the hydrolysis of inorganic pyrophosphate (PPi) forming two phosphate ions. This is Inorganic pyrophosphatase from Geobacillus stearothermophilus (Bacillus stearothermophilus).